Consider the following 462-residue polypeptide: GTPase Der (462 aa).

EngA-type G domains are found at residues 2–164 and 198–369; these read QKVI…EEKV and IRVG…KNYT. GTP is bound by residues 8-15, 55-59, 116-119, 204-211, 251-255, and 315-318; these read GKPNVGKS, DSGGL, NKID, GRVNVGKS, DTAGI, and NKWD. Residues 370 to 454 enclose the KH-like domain; that stretch reads QKIQTSKLNE…PIVLIPKKRG (85 aa).

This sequence belongs to the TRAFAC class TrmE-Era-EngA-EngB-Septin-like GTPase superfamily. EngA (Der) GTPase family. As to quaternary structure, associates with the 50S ribosomal subunit.

GTPase that plays an essential role in the late steps of ribosome biogenesis. This is GTPase Der from Campylobacter concisus (strain 13826).